Here is a 186-residue protein sequence, read N- to C-terminus: Ribosome-recycling factor (186 aa).

It belongs to the RRF family.

The protein localises to the cytoplasm. Its function is as follows. Responsible for the release of ribosomes from messenger RNA at the termination of protein biosynthesis. May increase the efficiency of translation by recycling ribosomes from one round of translation to another. The sequence is that of Ribosome-recycling factor from Rickettsia typhi (strain ATCC VR-144 / Wilmington).